Consider the following 360-residue polypeptide: Phosphate acyltransferase (360 aa).

A compositionally biased stretch (basic and acidic residues) spans 296–305 (STLRREHLDR). The tract at residues 296–360 (STLRREHLDR…LRTAEPPGSL (65 aa)) is disordered. A compositionally biased stretch (basic residues) spans 314-333 (PRQRRRPRRQKRRAACRPRP). Positions 334–350 (RSAAGRAPGSGVRGAAG) are enriched in low complexity.

This sequence belongs to the PlsX family. As to quaternary structure, homodimer. Probably interacts with PlsY.

The protein localises to the cytoplasm. It carries out the reaction a fatty acyl-[ACP] + phosphate = an acyl phosphate + holo-[ACP]. The protein operates within lipid metabolism; phospholipid metabolism. Its function is as follows. Catalyzes the reversible formation of acyl-phosphate (acyl-PO(4)) from acyl-[acyl-carrier-protein] (acyl-ACP). This enzyme utilizes acyl-ACP as fatty acyl donor, but not acyl-CoA. The polypeptide is Phosphate acyltransferase (Deinococcus radiodurans (strain ATCC 13939 / DSM 20539 / JCM 16871 / CCUG 27074 / LMG 4051 / NBRC 15346 / NCIMB 9279 / VKM B-1422 / R1)).